The following is a 79-amino-acid chain: Ribonuclease P protein component 1 (79 aa).

Belongs to the eukaryotic/archaeal RNase P protein component 1 family. Consists of a catalytic RNA component and at least 4-5 protein subunits.

The protein localises to the cytoplasm. The enzyme catalyses Endonucleolytic cleavage of RNA, removing 5'-extranucleotides from tRNA precursor.. Functionally, part of ribonuclease P, a protein complex that generates mature tRNA molecules by cleaving their 5'-ends. This chain is Ribonuclease P protein component 1, found in Saccharolobus solfataricus (strain ATCC 35092 / DSM 1617 / JCM 11322 / P2) (Sulfolobus solfataricus).